A 132-amino-acid polypeptide reads, in one-letter code: Acetylcholinesterase (132 aa).

Residue Asn37 is glycosylated (N-linked (GlcNAc...) asparagine). Cysteines 45 and 72 form a disulfide.

It belongs to the type-B carboxylesterase/lipase family.

It is found in the synapse. It localises to the secreted. The protein localises to the cell membrane. The catalysed reaction is acetylcholine + H2O = choline + acetate + H(+). Its function is as follows. Rapidly hydrolyzes choline released into the synapse. The polypeptide is Acetylcholinesterase (ACE-1) (Culex pipiens pipiens (Northern house mosquito)).